The chain runs to 82 residues: RNA-binding protein Hfq (82 aa).

Residues 11–71 (DTFLNHVRKT…ISTIMPGAPI (61 aa)) enclose the Sm domain.

This sequence belongs to the Hfq family. In terms of assembly, homohexamer.

RNA chaperone that binds small regulatory RNA (sRNAs) and mRNAs to facilitate mRNA translational regulation in response to envelope stress, environmental stress and changes in metabolite concentrations. Also binds with high specificity to tRNAs. This chain is RNA-binding protein Hfq, found in Rhodopseudomonas palustris (strain TIE-1).